The chain runs to 508 residues: MILVLDFGSQYTQLIARRLRESGIYAEIVPFFESIENIQKKAPKGLILSGGPASVYAKDAYKPSKKIFDLDLPILGICYGMQYLVDFFGGVVACTNEQEFGKAILEITQDSVIFEGVKIKSLVWMSHMDKVIELPKGFTTLAKSPNSPHCAIENAKIFGLQFHPEVIQSEEGGKILENFALLVCGCEKTWGMQHFAQKEMARLKEKIANAKVLCAVSGGVDSTVVATLLHRAIKDNLIAVFVDHGLLRKNEKEKVQAMFKDLQIPLNTIDAKEIFLSKLKGVSEPELKRKIIGETFIEAFEKEAKKHHLKGKIEFLAQGTLYPDVIESVSVKGPSKVIKTHHNVGGLPEWMDFKLIEPLRELFKDEVRLLGKELGISQDFLMRHPFPGPGLAIRILGEVSESKIRCLQEADFIFIEELKKANLYDKVWQAFCVLLNVNSVGVMGDNRTYENAICLRAVNASDGMTASFSFLEHSFLEKVSNRITNEVSGINRVVYDITSKPPGTIEWE.

The Glutamine amidotransferase type-1 domain maps to 1–189 (MILVLDFGSQ…ALLVCGCEKT (189 aa)). Cys78 (nucleophile) is an active-site residue. Residues His163 and Glu165 contribute to the active site. A GMPS ATP-PPase domain is found at 190–383 (WGMQHFAQKE…LGISQDFLMR (194 aa)). 217-223 (SGGVDST) serves as a coordination point for ATP.

As to quaternary structure, homodimer.

The catalysed reaction is XMP + L-glutamine + ATP + H2O = GMP + L-glutamate + AMP + diphosphate + 2 H(+). It participates in purine metabolism; GMP biosynthesis; GMP from XMP (L-Gln route): step 1/1. Catalyzes the synthesis of GMP from XMP. The protein is GMP synthase [glutamine-hydrolyzing] of Helicobacter pylori (strain Shi470).